The chain runs to 214 residues: Octanoyltransferase (214 aa).

The BPL/LPL catalytic domain occupies 29 to 214 (STTPDEIWIL…EHLQKQLMPT (186 aa)). Residues 69–76 (RGGEITYH), 146–148 (ALG), and 159–161 (GLA) contribute to the substrate site. The active-site Acyl-thioester intermediate is C177.

This sequence belongs to the LipB family.

The protein localises to the cytoplasm. The catalysed reaction is octanoyl-[ACP] + L-lysyl-[protein] = N(6)-octanoyl-L-lysyl-[protein] + holo-[ACP] + H(+). It functions in the pathway protein modification; protein lipoylation via endogenous pathway; protein N(6)-(lipoyl)lysine from octanoyl-[acyl-carrier-protein]: step 1/2. In terms of biological role, catalyzes the transfer of endogenously produced octanoic acid from octanoyl-acyl-carrier-protein onto the lipoyl domains of lipoate-dependent enzymes. Lipoyl-ACP can also act as a substrate although octanoyl-ACP is likely to be the physiological substrate. This Polynucleobacter asymbioticus (strain DSM 18221 / CIP 109841 / QLW-P1DMWA-1) (Polynucleobacter necessarius subsp. asymbioticus) protein is Octanoyltransferase.